We begin with the raw amino-acid sequence, 105 residues long: Malonate decarboxylase acyl carrier protein (105 aa).

Position 28 is an O-(phosphoribosyl dephospho-coenzyme A)serine (serine 28).

Belongs to the MdcC family. Post-translationally, covalently binds the prosthetic group of malonate decarboxylase.

It localises to the cytoplasm. Functionally, subunit of malonate decarboxylase, it is an acyl carrier protein to which acetyl and malonyl thioester residues are bound via a 2'-(5''-phosphoribosyl)-3'-dephospho-CoA prosthetic group and turn over during the catalytic mechanism. This chain is Malonate decarboxylase acyl carrier protein, found in Xanthomonas euvesicatoria pv. vesicatoria (strain 85-10) (Xanthomonas campestris pv. vesicatoria).